We begin with the raw amino-acid sequence, 166 residues long: SsrA-binding protein (166 aa).

A disordered region spans residues 146–166; sequence KRAAEKEKQSKKDVKAAMERY.

The protein belongs to the SmpB family.

The protein localises to the cytoplasm. In terms of biological role, required for rescue of stalled ribosomes mediated by trans-translation. Binds to transfer-messenger RNA (tmRNA), required for stable association of tmRNA with ribosomes. tmRNA and SmpB together mimic tRNA shape, replacing the anticodon stem-loop with SmpB. tmRNA is encoded by the ssrA gene; the 2 termini fold to resemble tRNA(Ala) and it encodes a 'tag peptide', a short internal open reading frame. During trans-translation Ala-aminoacylated tmRNA acts like a tRNA, entering the A-site of stalled ribosomes, displacing the stalled mRNA. The ribosome then switches to translate the ORF on the tmRNA; the nascent peptide is terminated with the 'tag peptide' encoded by the tmRNA and targeted for degradation. The ribosome is freed to recommence translation, which seems to be the essential function of trans-translation. The protein is SsrA-binding protein of Synechococcus sp. (strain CC9605).